The primary structure comprises 132 residues: ATP synthase epsilon chain, chloroplastic (132 aa).

Belongs to the ATPase epsilon chain family. As to quaternary structure, F-type ATPases have 2 components, CF(1) - the catalytic core - and CF(0) - the membrane proton channel. CF(1) has five subunits: alpha(3), beta(3), gamma(1), delta(1), epsilon(1). CF(0) has three main subunits: a, b and c.

Its subcellular location is the plastid. It localises to the chloroplast thylakoid membrane. Produces ATP from ADP in the presence of a proton gradient across the membrane. This chain is ATP synthase epsilon chain, chloroplastic, found in Coffea arabica (Arabian coffee).